The primary structure comprises 59 residues: LQHRTFCKLPAEPGPCKASIPAFYYNWAAKKCQLFHYGGCKGNANRFSTIEKCRRACVG.

Residues 7–57 (CKLPAEPGPCKASIPAFYYNWAAKKCQLFHYGGCKGNANRFSTIEKCRRAC) enclose the BPTI/Kunitz inhibitor domain. 3 disulfide bridges follow: C7-C57, C16-C40, and C32-C53.

It belongs to the venom Kunitz-type family. As to expression, expressed by the venom gland.

It is found in the secreted. In terms of biological role, daE1 and DaE2 are serine protease inhibitors that inhibit voltage-gated potassium channels Kv1.1/KCNA1 channels (IC(50)=300 nM). The chain is Kunitz-type serine protease inhibitor dendrotoxin DaE1 from Dendroaspis angusticeps (Eastern green mamba).